Consider the following 336-residue polypeptide: Methionine synthase (336 aa).

Positions 210, 212, 234, and 294 each coordinate Zn(2+).

This sequence belongs to the archaeal MetE family. Zn(2+) serves as cofactor.

The protein operates within amino-acid biosynthesis; L-methionine biosynthesis via de novo pathway. Its function is as follows. Catalyzes the transfer of a methyl group to L-homocysteine resulting in methionine formation. The physiological methyl donor is unknown. This is Methionine synthase from Thermococcus kodakarensis (strain ATCC BAA-918 / JCM 12380 / KOD1) (Pyrococcus kodakaraensis (strain KOD1)).